The chain runs to 86 residues: Co-chaperonin GroES (86 aa).

Belongs to the GroES chaperonin family. In terms of assembly, heptamer of 7 subunits arranged in a ring. Interacts with the chaperonin GroEL.

Its subcellular location is the cytoplasm. Together with the chaperonin GroEL, plays an essential role in assisting protein folding. The GroEL-GroES system forms a nano-cage that allows encapsulation of the non-native substrate proteins and provides a physical environment optimized to promote and accelerate protein folding. GroES binds to the apical surface of the GroEL ring, thereby capping the opening of the GroEL channel. In Campylobacter jejuni subsp. jejuni serotype O:6 (strain 81116 / NCTC 11828), this protein is Co-chaperonin GroES.